The chain runs to 284 residues: MTTAQFYCQYCTASLLGKKYVLKDDSLFCVTCYDRVFSNYCEECKKPIESDSKDLCYKDRHWHGGCFKCTKCNHSLVEKPFAAKDERLLCTECYSNECSSKCFHCKRTIMPGSRKMEFKGNYWHETCFVCENCRQPIGTKPLISKESGNFCVPCFEKEFAHYCNFCKKVITSGGITFCDQLWHKECFLCSGCRKDLCEEQFMSRDDYPFCVDCYNHLYANKCVACSKPISGLTGAKFICFQDSQWHSECFNCGKCSVSLVGKGFLTQNKEIFCQKCGSGMDSDI.

A C4-type zinc finger spans residues 8 to 32 (CQYCTASLLGKKYVLKDDSLFCVTC). LIM zinc-binding domains are found at residues 39–100 (NYCE…ECSS), 101–160 (KCFH…KEFA), 161–220 (HYCN…LYAN), and 223–283 (VACS…MDSD).

Interacts with CREM (via the third LIM domain). Interacts (via second LIM domain) with SPAG8.

The protein resides in the nucleus. In terms of biological role, may be involved in the regulation of spermatogenesis. Stimulates CREM transcriptional activity in a phosphorylation-independent manner. This Macaca fascicularis (Crab-eating macaque) protein is Four and a half LIM domains protein 5 (FHL5).